The following is an 82-amino-acid chain: Immediate early response 3-interacting protein 1 (82 aa).

A run of 2 helical transmembrane segments spans residues 2–22 (AFTLYALIQTAILFTNAIAVL) and 62–82 (VMRVPLIAVNSVCIVLLLLFG).

The protein belongs to the YOS1 family.

The protein localises to the endoplasmic reticulum membrane. In terms of biological role, regulator of endoplasmic reticulum secretion that acts as a key determinant of brain size. Required for secretion of extracellular matrix proteins. Required for correct brain development by depositing sufficient extracellular matrix proteins for tissue integrity and the proliferation of neural progenitors. Acts as a regulator of the unfolded protein response (UPR). The sequence is that of Immediate early response 3-interacting protein 1 from Danio rerio (Zebrafish).